The primary structure comprises 239 residues: Enolase-phosphatase E1 (239 aa).

Mg(2+) is bound by residues aspartate 13 and glutamate 15. Substrate-binding positions include 133-134 and lysine 170; that span reads SS. Aspartate 196 provides a ligand contact to Mg(2+).

This sequence belongs to the HAD-like hydrolase superfamily. MasA/MtnC family. Monomer. Requires Mg(2+) as cofactor.

It localises to the cytoplasm. Its subcellular location is the nucleus. The catalysed reaction is 5-methylsulfanyl-2,3-dioxopentyl phosphate + H2O = 1,2-dihydroxy-5-(methylsulfanyl)pent-1-en-3-one + phosphate. Its pathway is amino-acid biosynthesis; L-methionine biosynthesis via salvage pathway; L-methionine from S-methyl-5-thio-alpha-D-ribose 1-phosphate: step 3/6. The protein operates within amino-acid biosynthesis; L-methionine biosynthesis via salvage pathway; L-methionine from S-methyl-5-thio-alpha-D-ribose 1-phosphate: step 4/6. In terms of biological role, bifunctional enzyme that catalyzes the enolization of 2,3-diketo-5-methylthiopentyl-1-phosphate (DK-MTP-1-P) into the intermediate 2-hydroxy-3-keto-5-methylthiopentenyl-1-phosphate (HK-MTPenyl-1-P), which is then dephosphorylated to form the acireductone 1,2-dihydroxy-3-keto-5-methylthiopentene (DHK-MTPene). In Chaetomium globosum (strain ATCC 6205 / CBS 148.51 / DSM 1962 / NBRC 6347 / NRRL 1970) (Soil fungus), this protein is Enolase-phosphatase E1.